Consider the following 1176-residue polypeptide: DNA-directed RNA polymerase subunit beta (1176 aa).

Residues 13 to 30 (TDASLHQGRPQSSSNSSV) are compositionally biased toward polar residues. The interval 13–35 (TDASLHQGRPQSSSNSSVPGAPN) is disordered.

It belongs to the RNA polymerase beta chain family. In terms of assembly, the RNAP catalytic core consists of 2 alpha, 1 beta, 1 beta' and 1 omega subunit. When a sigma factor is associated with the core the holoenzyme is formed, which can initiate transcription.

The enzyme catalyses RNA(n) + a ribonucleoside 5'-triphosphate = RNA(n+1) + diphosphate. Functionally, DNA-dependent RNA polymerase catalyzes the transcription of DNA into RNA using the four ribonucleoside triphosphates as substrates. The sequence is that of DNA-directed RNA polymerase subunit beta from Mycobacterium marinum (strain ATCC BAA-535 / M).